The primary structure comprises 308 residues: FGSLLGICLLTQIITGLLLATHYTADTTLAFSSVAHTCRNVQYGWLIRNLQANGASFFFICIYLHIGRGFYYGSYLFKETWNTGVILLLTLMATAFVGYVLPWRQMSFWGATVITNLFSALPYIGQTIVEWAWGGFSVDNPTLTRFFALHFLLPFLIAGLTLIHFTFLHESGSNNPLGIMSDCDKIPFHPYFSVKDILGFMFMLLPLTTLALFSPNLLGDPENFTPANPLVTPPHIKPEWYFLFAYAILRSIPNKLGGVLALAASVLVLFLAPFLHTSKQRTMAFRPLSQFLFWMLVANLLILTWVGS.

The next 4 helical transmembrane spans lie at 1 to 21 (FGSL…LLAT), 45 to 66 (WLIR…YLHI), 81 to 101 (WNTG…GYVL), and 146 to 166 (FFAL…IHFT). H65 provides a ligand contact to heme b. Heme b is bound by residues H150 and H164. H169 is a binding site for a ubiquinone. The next 3 helical transmembrane spans lie at 194-214 (VKDI…ALFS), 256-276 (LGGV…PFLH), and 288-308 (LSQF…WVGS).

It belongs to the cytochrome b family. The cytochrome bc1 complex contains 11 subunits: 3 respiratory subunits (MT-CYB, CYC1 and UQCRFS1), 2 core proteins (UQCRC1 and UQCRC2) and 6 low-molecular weight proteins (UQCRH/QCR6, UQCRB/QCR7, UQCRQ/QCR8, UQCR10/QCR9, UQCR11/QCR10 and a cleavage product of UQCRFS1). This cytochrome bc1 complex then forms a dimer. Heme b serves as cofactor.

It localises to the mitochondrion inner membrane. Component of the ubiquinol-cytochrome c reductase complex (complex III or cytochrome b-c1 complex) that is part of the mitochondrial respiratory chain. The b-c1 complex mediates electron transfer from ubiquinol to cytochrome c. Contributes to the generation of a proton gradient across the mitochondrial membrane that is then used for ATP synthesis. The chain is Cytochrome b (MT-CYB) from Colaptes rupicola (Southern Andean flicker).